A 645-amino-acid polypeptide reads, in one-letter code: UPF0313 protein CLB_0243 (645 aa).

The Radical SAM core domain occupies 295-566 (AIKEVKFSIT…RMQRALLQFS (272 aa)). Residues Cys-309, Cys-313, and Cys-316 each coordinate [4Fe-4S] cluster. Residues 598 to 645 (NKPYKKSHKKNNAKNNNNHYNKNNNYNKNKDISKKNKKNSLSKHKKRK) are disordered. A compositionally biased stretch (basic residues) spans 600-609 (PYKKSHKKNN). A compositionally biased stretch (low complexity) spans 610 to 624 (AKNNNNHYNKNNNYN). Over residues 632–645 (KNKKNSLSKHKKRK) the composition is skewed to basic residues.

Belongs to the UPF0313 family. [4Fe-4S] cluster is required as a cofactor.

This is UPF0313 protein CLB_0243 from Clostridium botulinum (strain ATCC 19397 / Type A).